The sequence spans 205 residues: Transcriptional regulator GfcR (205 aa).

Belongs to the purine/pyrimidine phosphoribosyltransferase family. GfcR subfamily.

The chain is Transcriptional regulator GfcR from Methanococcus maripaludis (strain DSM 14266 / JCM 13030 / NBRC 101832 / S2 / LL).